Consider the following 539-residue polypeptide: Sodium/hydrogen exchanger 9B2 (539 aa).

At 1–94 (MEDSLFSVDK…ACPPQGCFSL (94 aa)) the chain is on the cytoplasmic side. The chain crosses the membrane as a helical span at residues 95–112 (AITNVTMVILIWAVVWSI). Residues 113 to 121 (TGPECLPGG) lie on the Extracellular side of the membrane. A helical transmembrane segment spans residues 122-141 (NLFGILALLFSAALGGKLIS). Residues 142-152 (LIKIPSLPPLP) are Cytoplasmic-facing. The chain crosses the membrane as a helical span at residues 153 to 169 (PLLGMLLAGFLIRNIPV). The Extracellular segment spans residues 170–179 (ITDQVQIHHK). Residues 180–197 (WSAALRNIALAIILVRAG) form a helical membrane-spanning segment. Topologically, residues 198-208 (LGLDPKALRKL) are cytoplasmic. The chain crosses the membrane as a helical span at residues 209-235 (KAVCLRLSFGPCVVESCTAAVVSHFIM). Topologically, residues 236–241 (GFPLTW) are extracellular. A helical transmembrane segment spans residues 242-250 (GFMLGFVLG). The Cytoplasmic portion of the chain corresponds to 251–278 (AVSPAVVVPSMLILQKEGFGVDKGIPTL). Residues V252, G283, D286, and D287 each contribute to the Na(+) site. Residues 279–298 (LMAAGSFDDVLAITGFNTCL) form a helical membrane-spanning segment. Residues 299 to 308 (GMAFSSGSTL) lie on the Extracellular side of the membrane. A helical transmembrane segment spans residues 309 to 332 (NTIVRGVLEVVVGIAAGLLFGFFL). Topologically, residues 333 to 347 (HYFPSKDQENLKGKR) are cytoplasmic. Residues 348 to 365 (SYLILALSVFAVFGSLYF) traverse the membrane as a helical segment. At 366–369 (GFPG) the chain is on the extracellular side. A helical transmembrane segment spans residues 370-381 (SGGLCTLVMAFL). The Cytoplasmic portion of the chain corresponds to 382–398 (AGIGWSTDKTVVEDIIA). The helical transmembrane segment at 399–419 (VSWDIFQPLLFGLIGAEISVA) threads the bilayer. Topologically, residues 420–425 (SLKPET) are extracellular. Residues 426–448 (VGLCTATLIIALIIRICISFLMV) form a helical membrane-spanning segment. Residues 449–469 (CFSGFSLKEKIFISLAWMPKA) lie on the Cytoplasmic side of the membrane. A helical transmembrane segment spans residues 470-481 (TVQAAIGSVALD). At 482-494 (TARTLENKQFEDY) the chain is on the extracellular side. A helical transmembrane segment spans residues 495–517 (GMDVLTVAFLGILVTAPIGALVI). Over 518–539 (GLTGPKMLEKSESRTVTEEGSV) the chain is Cytoplasmic.

The protein belongs to the monovalent cation:proton antiporter 1 (CPA1) transporter (TC 2.A.36) family. In terms of assembly, homodimer; dimerization is essential for SLC9B2 activity. Lipids seem to play a role in the stabilization of the dimerization subdomain.

It is found in the cell membrane. The protein localises to the mitochondrion membrane. It localises to the endosome membrane. The protein resides in the recycling endosome membrane. Its subcellular location is the cytoplasmic vesicle. It is found in the secretory vesicle. The protein localises to the synaptic vesicle membrane. It localises to the basolateral cell membrane. The protein resides in the apical cell membrane. The enzyme catalyses Li(+)(out) + H(+)(in) = Li(+)(in) + H(+)(out). It carries out the reaction Li(+)(in) + Na(+)(out) = Li(+)(out) + Na(+)(in). It catalyses the reaction Na(+)(in) + H(+)(out) = Na(+)(out) + H(+)(in). Its activity is regulated as follows. Allosterically inhibited by the N-terminal domain. Inhibited by phloretin. Electroneutral Na(+) Li(+)/H(+) antiporter that extrudes Na(+) or Li(+) in exchange for external protons across the membrane. Uses the proton gradient/membrane potential to extrude sodium. Contributes to the regulation of intracellular pH and sodium homeostasis. Also able to mediate Na(+)/Li(+) antiporter activity in kidney. The polypeptide is Sodium/hydrogen exchanger 9B2 (slc9b2) (Xenopus tropicalis (Western clawed frog)).